Consider the following 119-residue polypeptide: Holo-[acyl-carrier-protein] synthase (119 aa).

Residues aspartate 8 and glutamate 58 each contribute to the Mg(2+) site.

It belongs to the P-Pant transferase superfamily. AcpS family. Mg(2+) serves as cofactor.

The protein localises to the cytoplasm. It carries out the reaction apo-[ACP] + CoA = holo-[ACP] + adenosine 3',5'-bisphosphate + H(+). In terms of biological role, transfers the 4'-phosphopantetheine moiety from coenzyme A to a Ser of acyl-carrier-protein. This Bacillus cereus (strain G9842) protein is Holo-[acyl-carrier-protein] synthase.